Here is a 350-residue protein sequence, read N- to C-terminus: Atypical chemokine receptor 4 (350 aa).

Residues 1–42 (MALEQNQSTDYYYEENEMNGTYDYSQYELICIKEDVREFAKV) lie on the Extracellular side of the membrane. Asn6 and Asn19 each carry an N-linked (GlcNAc...) asparagine glycan. A helical membrane pass occupies residues 43-63 (FLPVFLTIVFVIGLAGNSMVV). At 64–87 (AIYAYYKKQRTKTDVYILNLAVAD) the chain is on the cytoplasmic side. The chain crosses the membrane as a helical span at residues 88–108 (LLLLFTLPFWAVNAVHGWVLG). Residues 109 to 113 (KIMCK) lie on the Extracellular side of the membrane. A disulfide bridge connects residues Cys112 and Cys184. Residues 114–134 (ITSALYTLNFVSGMQFLACIS) traverse the membrane as a helical segment. Residues 135–154 (IDRYVAVTKVPSQSGVGKPC) are Cytoplasmic-facing. The chain crosses the membrane as a helical span at residues 155–175 (WIICFCVWMAAILLSIPQLVF). Residues 176-201 (YTVNDNARCIPIFPRYLGTSMKALIQ) are Extracellular-facing. Residues 202–222 (MLEICIGFVVPFLIMGVCYFI) traverse the membrane as a helical segment. The Cytoplasmic portion of the chain corresponds to 223-240 (TARTLMKMPNIKISRPLK). The chain crosses the membrane as a helical span at residues 241 to 261 (VLLTVVIVFIVTQLPYNIVKF). The Extracellular segment spans residues 262–289 (CRAIDIIYSLITSCNMSKRMDIAIQVTE). The helical transmembrane segment at 290-310 (SIALFHSCLNPILYVFMGASF) threads the bilayer. Over 311–350 (KNYVMKVAKKYGSWRRQRQSVEEFPFDSEGPTEPTSTFSI) the chain is Cytoplasmic.

Belongs to the G-protein coupled receptor 1 family. Atypical chemokine receptor subfamily. As to quaternary structure, forms heteromers with CXCR3. Interacts with ARRB1 and ARRB2. The Ser/Thr residues in the C-terminal cytoplasmic tail may be phosphorylated. Predominantly expressed in heart. Lower expression in lung, pancreas, spleen, colon, skeletal muscle and small intestine.

It is found in the early endosome. The protein localises to the recycling endosome. Its subcellular location is the cell membrane. Functionally, atypical chemokine receptor that controls chemokine levels and localization via high-affinity chemokine binding that is uncoupled from classic ligand-driven signal transduction cascades, resulting instead in chemokine sequestration, degradation, or transcytosis. Also known as interceptor (internalizing receptor) or chemokine-scavenging receptor or chemokine decoy receptor. Acts as a receptor for chemokines CCL2, CCL8, CCL13, CCL19, CCL21 and CCL25. Chemokine-binding does not activate G-protein-mediated signal transduction but instead induces beta-arrestin recruitment, leading to ligand internalization. Plays an important role in controlling the migration of immune and cancer cells that express chemokine receptors CCR7 and CCR9, by reducing the availability of CCL19, CCL21, and CCL25 through internalization. Negatively regulates CXCR3-induced chemotaxis. Regulates T-cell development in the thymus. This is Atypical chemokine receptor 4 (ACKR4) from Homo sapiens (Human).